A 35-amino-acid chain; its full sequence is uncharacterized protein (35 aa).

This is an uncharacterized protein from Archaeoglobus fulgidus (strain ATCC 49558 / DSM 4304 / JCM 9628 / NBRC 100126 / VC-16).